The sequence spans 372 residues: 4-hydroxy-3-methylbut-2-en-1-yl diphosphate synthase (flavodoxin) (372 aa).

[4Fe-4S] cluster-binding residues include cysteine 270, cysteine 273, cysteine 305, and glutamate 312.

The protein belongs to the IspG family. [4Fe-4S] cluster serves as cofactor.

It catalyses the reaction (2E)-4-hydroxy-3-methylbut-2-enyl diphosphate + oxidized [flavodoxin] + H2O + 2 H(+) = 2-C-methyl-D-erythritol 2,4-cyclic diphosphate + reduced [flavodoxin]. It participates in isoprenoid biosynthesis; isopentenyl diphosphate biosynthesis via DXP pathway; isopentenyl diphosphate from 1-deoxy-D-xylulose 5-phosphate: step 5/6. Its function is as follows. Converts 2C-methyl-D-erythritol 2,4-cyclodiphosphate (ME-2,4cPP) into 1-hydroxy-2-methyl-2-(E)-butenyl 4-diphosphate. This chain is 4-hydroxy-3-methylbut-2-en-1-yl diphosphate synthase (flavodoxin), found in Pseudoalteromonas translucida (strain TAC 125).